The chain runs to 317 residues: mRNA 3'-end-processing protein yth-1 (317 aa).

Residues 1–20 (MATTTQTTTNSLPSGAGGPQ) form a disordered region. C3H1-type zinc fingers lie at residues 51–78 (PADR…HVTA), 93–120 (GFGS…HEYN), 121–149 (LRKM…HIDP), 150–177 (LSRL…HFRR), and 179–202 (LCLY…HPRW). The segment covering 202-217 (WTADKDMEKPRAKGEG) has biased composition (basic and acidic residues). The tract at residues 202 to 317 (WTADKDMEKP…GRGGFRGKGH (116 aa)) is disordered. Positions 223–237 (QQQQQQQQQQHMGDA) are enriched in low complexity. The span at 253 to 288 (YMDRERERDRDNREREMMMQGRDRDGGGHDRHKDRF) shows a compositional bias: basic and acidic residues. Over residues 289-301 (GGGGGGGGGGRGR) the composition is skewed to gly residues. Residues 302–317 (GGWRGRGRGGFRGKGH) are compositionally biased toward basic residues.

The protein belongs to the CPSF4/YTH1 family.

It localises to the nucleus. Functionally, component of the cleavage factor I (CF I) involved in pre-mRNA 3'-end processing. The sequence is that of mRNA 3'-end-processing protein yth-1 (yth-1) from Neurospora crassa (strain ATCC 24698 / 74-OR23-1A / CBS 708.71 / DSM 1257 / FGSC 987).